The primary structure comprises 173 residues: Bifunctional protein PyrR (173 aa).

The PRPP-binding signature appears at 93–105 (VILIDDVLYTGRT).

This sequence belongs to the purine/pyrimidine phosphoribosyltransferase family. PyrR subfamily. In terms of assembly, homodimer and homohexamer; in equilibrium.

It carries out the reaction UMP + diphosphate = 5-phospho-alpha-D-ribose 1-diphosphate + uracil. In terms of biological role, regulates transcriptional attenuation of the pyrimidine nucleotide (pyr) operon by binding in a uridine-dependent manner to specific sites on pyr mRNA. This disrupts an antiterminator hairpin in the RNA and favors formation of a downstream transcription terminator, leading to a reduced expression of downstream genes. Also displays a weak uracil phosphoribosyltransferase activity which is not physiologically significant. The sequence is that of Bifunctional protein PyrR from Streptococcus pyogenes serotype M12 (strain MGAS2096).